Here is a 211-residue protein sequence, read N- to C-terminus: Scoloptoxin SSD43 (211 aa).

Residues 1-20 (MNFVIYGVIVVLTSQLYVDG) form the signal peptide.

Post-translationally, contains 3 disulfide bonds. As to expression, expressed by the venom gland.

Its subcellular location is the secreted. In terms of biological role, shows trypsin inhibiting activity. The protein is highly thermally stable, since its incubation in boiling water during 10 minutes does not reduce its activity. The protein is Scoloptoxin SSD43 of Scolopendra dehaani (Thai centipede).